The following is a 359-amino-acid chain: MNYQDFISEQTEYYHLPVPFELEGGGVLTGVQVAYRTWGKLNSAGDNGVLICHALTGSADADEWWEGLLGANKALDSDRDFIICSNILGSCYGTTGATSINPQTGIPYGASFPAITIRDMVRLQAALIQHLGIKSLQLVIGGSLGGMQVLEWALLYPEIVQAIAPIATSGRHSAWCIGLSEAQRQAIYADPNWKGGNYTKEQPPSQGLAVARMMAMSAYRSWQSFTARFGRQYDAVADQFAIASYLQHHGQKLVQRFDANTYITLTQAMDSHDVAQGRDYKSVLQSIKQPALVVAIDSDILYPPTEQQELADFIPDAQLGWLQSSYGHDAFLIDIATLSQLVINFRQSLSLKTFSDVTT.

Positions 49-332 constitute an AB hydrolase-1 domain; the sequence is VLICHALTGS…QSSYGHDAFL (284 aa). The Nucleophile role is filled by serine 143. Arginine 212 contacts substrate. Catalysis depends on residues aspartate 299 and histidine 328. Position 329 (aspartate 329) interacts with substrate.

It belongs to the AB hydrolase superfamily. MetX family. Homodimer.

The protein resides in the cytoplasm. It carries out the reaction L-homoserine + acetyl-CoA = O-acetyl-L-homoserine + CoA. The protein operates within amino-acid biosynthesis; L-methionine biosynthesis via de novo pathway; O-acetyl-L-homoserine from L-homoserine: step 1/1. In terms of biological role, transfers an acetyl group from acetyl-CoA to L-homoserine, forming acetyl-L-homoserine. The sequence is that of Homoserine O-acetyltransferase from Trichormus variabilis (strain ATCC 29413 / PCC 7937) (Anabaena variabilis).